The following is a 367-amino-acid chain: Protein RIC-3 (367 aa).

An N-terminal signal peptide occupies residues 1–31 (MAYSTVQRVALASGLVLAVSLLLPKAFLSRG). The interval 30–67 (RGKRPEPPPGPEGKLDRFPPMMHHHSAPSDGQTPGARF) is disordered. Residues 32-95 (KRPEPPPGPE…AGGGGSGRGL (64 aa)) are Lumenal-facing. A helical membrane pass occupies residues 96-116 (MGQIIPIYGFGIFLYILYILF). Topologically, residues 117–367 (KLSKGKTAED…LRKRNPQGFE (251 aa)) are cytoplasmic. A coiled-coil region spans residues 138 to 169 (HRKITNFELVQLQEKLKETEEAMEKLINRVGP). Lysine 201 carries the post-translational modification N6-acetyllysine; alternate. Residue lysine 201 forms a Glycyl lysine isopeptide (Lys-Gly) (interchain with G-Cter in ubiquitin); alternate linkage. Disordered stretches follow at residues 262–301 (QMGEIEEEGSERLSWDHLPTDPGAQKDNSVAPCDPKPESC) and 322–367 (ADGY…QGFE). Residues 271 to 280 (SERLSWDHLP) show a composition bias toward basic and acidic residues. Residues 358–367 (LRKRNPQGFE) show a composition bias toward basic residues.

This sequence belongs to the ric-3 family. As to quaternary structure, monomer and homodimer. Interacts with CHRNA7, CHRNA3, CHRNA4, CHRNB2, CHRNB4 and HTR3A. As to expression, expressed in brain, with highest levels in hippocampus, cerebellum and superior colliculus.

The protein localises to the endoplasmic reticulum membrane. Molecular chaperone which promotes the proper subunit assembly and surface trafficking of alpha-7 (CHRNA7) nicotinic acetylcholine receptor. Promotes the proper subunit assembly and cell surface expression of alpha-8 (CHRNA8) nicotinic acetylcholine receptor. May also promote functional expression of homomeric serotoninergic 5-HT3 receptors, and of heteromeric acetylcholine receptors alpha-3/beta-2, alpha-3/beta-4, alpha-4/beta-2 and alpha-4/beta-4. This is Protein RIC-3 (Ric3) from Mus musculus (Mouse).